Reading from the N-terminus, the 72-residue chain is Long neurotoxin OH-5 (72 aa).

Intrachain disulfides connect cysteine 3-cysteine 22, cysteine 15-cysteine 43, cysteine 28-cysteine 32, cysteine 47-cysteine 58, and cysteine 59-cysteine 64.

Belongs to the three-finger toxin family. Long-chain subfamily. Type II alpha-neurotoxin sub-subfamily. In terms of tissue distribution, expressed by the venom gland.

It is found in the secreted. Functionally, binds with high affinity to muscular (alpha-1/CHRNA1) and neuronal (alpha-7/CHRNA7) nicotinic acetylcholine receptor (nAChR) and inhibits acetylcholine from binding to the receptor, thereby impairing neuromuscular and neuronal transmission. The protein is Long neurotoxin OH-5 of Ophiophagus hannah (King cobra).